The following is a 180-amino-acid chain: Large ribosomal subunit protein uL6 (180 aa).

Belongs to the universal ribosomal protein uL6 family. As to quaternary structure, part of the 50S ribosomal subunit.

Its function is as follows. This protein binds to the 23S rRNA, and is important in its secondary structure. It is located near the subunit interface in the base of the L7/L12 stalk, and near the tRNA binding site of the peptidyltransferase center. In Thermus aquaticus, this protein is Large ribosomal subunit protein uL6.